The sequence spans 457 residues: Transcription factor E2F3 (457 aa).

A disordered region spans residues 80–171 (LLPSVPGTEP…PKSPSEKTRY (92 aa)). Residues 93 to 102 (SLYTTPQGPS) are compositionally biased toward polar residues. Positions 96-145 (TTPQGPSSRVGLLQQPPAPGRGGGGGPPAKRRLELGESGHQYLSDGLKTP) are cyclin A/CDK2 binding. A DNA-binding region spans residues 147 to 237 (GKGRAALRSP…KNNVQWMGCS (91 aa)). Over residues 155–164 (SPDSPKTPKS) the composition is skewed to low complexity. Positions 196-217 (LNKAAEVLKVQKRRIYDITNVL) are leucine-zipper. The DEF box signature appears at 201–237 (EVLKVQKRRIYDITNVLEGIHLIKKKSKNNVQWMGCS). The segment at 238 to 329 (LSEDGGMLAQ…VPDSIESLQI (92 aa)) is dimerization. The segment at 350-387 (HRPMKTNNQDHNGNIPKPTSKDLASNNSGHSDCSVSTA) is disordered. A compositionally biased stretch (polar residues) spans 371 to 387 (DLASNNSGHSDCSVSTA). The interval 383–457 (SVSTANLSPL…LPLVEDFMCS (75 aa)) is transactivation. Residues 424–441 (EDYLLSLGEEEGISDLFD) form a retinoblastoma protein binding region.

This sequence belongs to the E2F/DP family. Component of the DRTF1/E2F transcription factor complex. Binds cooperatively with TFDP1/Dp-1 to E2F sites. Interacts with retinoblastoma protein RB1 and related proteins (such as RBL1) that inhibit the E2F transactivation domain. Binds EAPP.

The protein resides in the nucleus. In terms of biological role, transcription activator that binds DNA cooperatively with DP proteins through the E2 recognition site, 5'-TTTC[CG]CGC-3' found in the promoter region of a number of genes whose products are involved in cell cycle regulation or in DNA replication. The DRTF1/E2F complex functions in the control of cell-cycle progression from G1 to S phase. E2F3 binds specifically to RB1 in a cell-cycle dependent manner. Inhibits adipogenesis, probably through the repression of CEBPA binding to its target gene promoters. The chain is Transcription factor E2F3 (E2f3) from Mus musculus (Mouse).